A 656-amino-acid chain; its full sequence is Mucin-20 (656 aa).

A signal peptide spans 1–21 (MGSVWGLAVPLLVFCWKVGVS). Composition is skewed to polar residues over residues 85–96 (ATSISSEVNSRD), 114–125 (PAASSLEAQTTS), and 159–170 (TTSPAPSFLDTQ). Disordered stretches follow at residues 85-125 (ATSI…QTTS), 159-232 (TTSP…TQTI), and 329-348 (YLSS…LSSS). Residues 171 to 227 (TTSPEPSSLTTSPAPSSLITSPTPSSLTTSPAPSFLDTQTTSPAPSSLTTSPAPSSL) show a composition bias toward low complexity. Repeat copies occupy residues 180–188 (TTSPAPSSL), 189–197 (ITSPTPSSL), 198–206 (TTSPAPSFL), 210–218 (TTSPAPSSL), and 219–227 (TTSPAPSSL). Residues 180–227 (TTSPAPSSLITSPTPSSLTTSPAPSFLDTQTTSPAPSSLTTSPAPSSL) form an approximate repeats region. N-linked (GlcNAc...) asparagine glycans are attached at residues Asn366 and Asn570. The tract at residues 399-603 (TAALFTSEIL…WIRKTTKHDP (205 aa)) is involved in oligomerization. Over residues 560–573 (STTASTSKNPNITL) the composition is skewed to polar residues. A disordered region spans residues 560 to 592 (STTASTSKNPNITLTKTTASPKPPTHPTTSAST). An interaction with MET region spans residues 604–656 (GEDGGFLLVRLTVASPKDLTEHNAREKLMNQLRRELHARMPLVHMSFLSIRRG).

Interacts with MET; oligomerization increases affinity for MET. Highly expressed in kidney. Up-regulated in renal tissues during renal injury.

The protein localises to the secreted. Its subcellular location is the apical cell membrane. It localises to the basolateral cell membrane. It is found in the cell projection. The protein resides in the microvillus membrane. Functionally, may regulate MET signaling cascade. Seems to decrease hepatocyte growth factor (HGF)-induced transient MAPK activation. Blocks GRB2 recruitment to MET thus suppressing the GRB2-RAS pathway. Inhibits HGF-induced proliferation of MMP1 and MMP9 expression. This chain is Mucin-20 (Muc20), found in Mus musculus (Mouse).